Consider the following 513-residue polypeptide: MAKKRPLALLILDGWGYSEDTQDNAVFHANTPVLDKLNAQYPHSLISGSGIDVGLPDGQMGNSEVGHINIGSGRIVYQELTRISKAIADHEFEQNAALCDAVDKAIAANGAVHIMGLLSAGGVHSHEEHIEAMCRMAVERGATKVYLHAFLDGRDTPPRSAKNSLVHFDELFASLGHGRTASIIGRYFAMDRDNRWDRVSQAYELITEAKGKFTYASAPEALEAAYARDENDEFVAASAIVDAQGEAAVLSDNDSLIFMNFRADRARQITRTFVNPDFDGFKRNKTPKINFVMLTDYAADINAPVAYPSSDLVNTLGETLQNLDKTQLRISETEKYAHVTFFFNGGKEEPFEGEDRILIQSPKVATYDLQPEMSSTELTDKLVAAIESTKYDVIICNYPNGDMVGHSGNFDAAVKACEAVDACIGRVVEALAKVDGECLITADHGNAEKMKDPSNGQAFTAHTSNLVPFVYVGRDAVIKDGGRLSDIAPTMLTLMGQSIPKEMSGRCIIDLKE.

Mn(2+) contacts are provided by Asp13 and Ser63. Ser63 (phosphoserine intermediate) is an active-site residue. Residues His124, 154–155 (RD), Arg186, Arg192, 262–265 (RADR), and Lys335 contribute to the substrate site. Mn(2+) is bound by residues Asp402, His406, Asp443, His444, and His462.

Belongs to the BPG-independent phosphoglycerate mutase family. In terms of assembly, monomer. It depends on Mn(2+) as a cofactor.

It carries out the reaction (2R)-2-phosphoglycerate = (2R)-3-phosphoglycerate. It functions in the pathway carbohydrate degradation; glycolysis; pyruvate from D-glyceraldehyde 3-phosphate: step 3/5. In terms of biological role, catalyzes the interconversion of 2-phosphoglycerate and 3-phosphoglycerate. The chain is 2,3-bisphosphoglycerate-independent phosphoglycerate mutase from Shewanella frigidimarina (strain NCIMB 400).